The primary structure comprises 658 residues: MLAGCSSSSLLSPTRRLRSEAVAATSATVSAHFPMNTQRLDLPCSSSFSRKETPSSRPLGRSISLDNSNNNNNKPIERKTKTSGCSLKQNIKLPPLATTRGNGEGFSWNNDNNNRGKSLKRLAEEDESCLSRAKRTKCENEGGFWFEHFTGQDSSSPALPFSLTCSGDDEEKVCFVPSEVISQPLPNWVDSVITELAGIGDKDVESSLPAAVKEASGGSSTSASSESRSLSHRVPEPTNGSRNPYSHRGATEERTTGNINNNNNRNDLQRDFELVNLLTGCLDAIRSRNIAAINHFIARTGDLASPRGRTPMTRLIAYYIEALALRVARMWPHIFHIAPPREFDRTVEDESGNALRFLNQVTPIPKFIHFTANEMLLRAFEGKERVHIIDFDIKQGLQWPSFFQSLASRINPPHHVRITGIGESKLELNETGDRLHGFAEAMNLQFEFHPVVDRLEDVRLWMLHVKEGESVAVNCVMQMHKTLYDGTGAAIRDFLGLIRSTNPIALVLAEQEAEHNSEQLETRVCNSLKYYSAMFDAIHTNLATDSLMRVKVEEMLFGREIRNIVACEGSHRQERHVGFRHWRRMLEQLGFRSLGVSEREVLQSKMLLRMYGSDNEGFFNVERSDEDNGGEGGRGGGVTLRWSEQPLYTISAWTTGGN.

3 disordered regions span residues 43–85 (PCSS…TSGC), 96–115 (LATTRGNGEGFSWNNDNNNR), and 209–265 (PAAV…NNNR). The segment covering 214–228 (EASGGSSTSASSESR) has biased composition (low complexity). One can recognise a GRAS domain in the interval 265-654 (RNDLQRDFEL…QPLYTISAWT (390 aa)). Residues 272-336 (FELVNLLTGC…VARMWPHIFH (65 aa)) form a leucine repeat I (LRI) region. The interval 355–420 (LRFLNQVTPI…NPPHHVRITG (66 aa)) is VHIID. The VHIID motif lies at 386–390 (VHIID). Residues 430–462 (ETGDRLHGFAEAMNLQFEFHPVVDRLEDVRLWM) are leucine repeat II (LRII). The segment at 471 to 563 (VAVNCVMQMH…EMLFGREIRN (93 aa)) is PFYRE. The SAW stretch occupies residues 566–654 (ACEGSHRQER…QPLYTISAWT (89 aa)).

It belongs to the GRAS family. In terms of assembly, interacts with SNRNP35 and CYP95. In terms of tissue distribution, expressed in roots and sepals.

Its subcellular location is the nucleus. In terms of biological role, probable transcription factor involved in plant development. This chain is Scarecrow-like protein 28 (SCL28), found in Arabidopsis thaliana (Mouse-ear cress).